Here is a 526-residue protein sequence, read N- to C-terminus: Peptide chain release factor 3 (526 aa).

The 269-residue stretch at 9–277 (DKRRTFAIIS…GIVEWAPKPL (269 aa)) folds into the tr-type G domain. GTP is bound by residues 18–25 (SHPDAGKT), 86–90 (DTPGH), and 140–143 (NKCD).

This sequence belongs to the TRAFAC class translation factor GTPase superfamily. Classic translation factor GTPase family. PrfC subfamily.

The protein localises to the cytoplasm. Functionally, increases the formation of ribosomal termination complexes and stimulates activities of RF-1 and RF-2. It binds guanine nucleotides and has strong preference for UGA stop codons. It may interact directly with the ribosome. The stimulation of RF-1 and RF-2 is significantly reduced by GTP and GDP, but not by GMP. The polypeptide is Peptide chain release factor 3 (Shewanella frigidimarina (strain NCIMB 400)).